We begin with the raw amino-acid sequence, 552 residues long: DNA ligase (552 aa).

Position 229 (glutamate 229) interacts with ATP. Catalysis depends on lysine 231, which acts as the N6-AMP-lysine intermediate. ATP-binding residues include arginine 236 and glutamate 283. Mg(2+)-binding residues include glutamate 283 and glutamate 377. Positions 382 and 397 each coordinate ATP.

This sequence belongs to the ATP-dependent DNA ligase family. As to quaternary structure, interacts with host TOP2A and TOP2B. Requires Mg(2+) as cofactor.

It is found in the host cytoplasm. The catalysed reaction is ATP + (deoxyribonucleotide)n-3'-hydroxyl + 5'-phospho-(deoxyribonucleotide)m = (deoxyribonucleotide)n+m + AMP + diphosphate.. DNA ligase that seals nicks in double-stranded DNA during DNA replication, DNA recombination and DNA repair. Recruits cellular topoisomerase II to sites of viral replication and assembly. This Homo sapiens (Human) protein is DNA ligase (OPG180).